Consider the following 606-residue polypeptide: Endonuclease 8-like 3 (606 aa).

The active-site Schiff-base intermediate with DNA; via amino nitrogen is the V2. N193 and R272 together coordinate DNA. Residues 248-282 form an FPG-type zinc finger; sequence KVYKRPNCDQCHSKITVCRFGENSRMTYFCPHCQK. The segment at 318–347 adopts a RanBP2-type zinc-finger fold; the sequence is SEEQWSCVVCTLINRPSAKACDACLTTRPL. Position 451 is a phosphoserine (S451). The segment covering 479-494 has biased composition (polar residues); the sequence is KSYNSGLSNSELQTNR. The disordered stretch occupies residues 479 to 506; it reads KSYNSGLSNSELQTNRTRGHHSKSDGSP. C508, H511, C534, C542, C555, H557, C580, and C588 together coordinate Zn(2+). 2 GRF-type zinc fingers span residues 508-551 and 555-597; these read CKMH…ADLS and CRHG…AENG.

This sequence belongs to the FPG family. In terms of tissue distribution, expressed in testis, thymus, spleen and bone marrow. In young mice, expressed at higher levels in thymocytes than splenocytes. At 12 dpc, abundant in the subventricular zone (SVZ) of the lateral ventricles. At 17.5 dpc and P0, expression is limited to distinct cells in the cortical SVZ, in cells of the secondary matrix, the dentate gyrus migratory route and the dentate gyrus.

It localises to the nucleus. Its subcellular location is the chromosome. The catalysed reaction is 2'-deoxyribonucleotide-(2'-deoxyribose 5'-phosphate)-2'-deoxyribonucleotide-DNA = a 3'-end 2'-deoxyribonucleotide-(2,3-dehydro-2,3-deoxyribose 5'-phosphate)-DNA + a 5'-end 5'-phospho-2'-deoxyribonucleoside-DNA + H(+). In terms of biological role, DNA glycosylase which prefers single-stranded DNA (ssDNA), or partially ssDNA structures such as bubble and fork structures, to double-stranded DNA (dsDNA). Mediates interstrand cross-link repair in response to replication stress: acts by mediating DNA glycosylase activity, cleaving one of the two N-glycosyl bonds comprising the interstrand cross-link, which avoids the formation of a double-strand break but generates an abasic site that is bypassed by translesion synthesis polymerases. In vitro, displays strong glycosylase activity towards the hydantoin lesions spiroiminodihydantoin (Sp) and guanidinohydantoin (Gh) in both ssDNA and dsDNA; also recognizes FapyA, FapyG, 5-OHU, 5-OHC, 5-OHMH, Tg and 8-oxoA lesions in ssDNA. No activity on 8-oxoG detected. Also shows weak DNA-(apurinic or apyrimidinic site) lyase activity. In vivo, appears to be the primary enzyme involved in removing Sp and Gh from ssDNA in neonatal tissues. This is Endonuclease 8-like 3 (Neil3) from Mus musculus (Mouse).